A 165-amino-acid polypeptide reads, in one-letter code: SsrA-binding protein (165 aa).

Belongs to the SmpB family.

The protein resides in the cytoplasm. Required for rescue of stalled ribosomes mediated by trans-translation. Binds to transfer-messenger RNA (tmRNA), required for stable association of tmRNA with ribosomes. tmRNA and SmpB together mimic tRNA shape, replacing the anticodon stem-loop with SmpB. tmRNA is encoded by the ssrA gene; the 2 termini fold to resemble tRNA(Ala) and it encodes a 'tag peptide', a short internal open reading frame. During trans-translation Ala-aminoacylated tmRNA acts like a tRNA, entering the A-site of stalled ribosomes, displacing the stalled mRNA. The ribosome then switches to translate the ORF on the tmRNA; the nascent peptide is terminated with the 'tag peptide' encoded by the tmRNA and targeted for degradation. The ribosome is freed to recommence translation, which seems to be the essential function of trans-translation. The sequence is that of SsrA-binding protein from Ruthia magnifica subsp. Calyptogena magnifica.